A 284-amino-acid chain; its full sequence is Bifunctional protein FolD 2 (284 aa).

Residues Gly165–Gly167, Thr192, and Val233 each bind NADP(+).

It belongs to the tetrahydrofolate dehydrogenase/cyclohydrolase family. Homodimer.

It carries out the reaction (6R)-5,10-methylene-5,6,7,8-tetrahydrofolate + NADP(+) = (6R)-5,10-methenyltetrahydrofolate + NADPH. It catalyses the reaction (6R)-5,10-methenyltetrahydrofolate + H2O = (6R)-10-formyltetrahydrofolate + H(+). It participates in one-carbon metabolism; tetrahydrofolate interconversion. Catalyzes the oxidation of 5,10-methylenetetrahydrofolate to 5,10-methenyltetrahydrofolate and then the hydrolysis of 5,10-methenyltetrahydrofolate to 10-formyltetrahydrofolate. In Streptomyces avermitilis (strain ATCC 31267 / DSM 46492 / JCM 5070 / NBRC 14893 / NCIMB 12804 / NRRL 8165 / MA-4680), this protein is Bifunctional protein FolD 2.